A 68-amino-acid chain; its full sequence is Large ribosomal subunit protein bL32 (68 aa).

The protein belongs to the bacterial ribosomal protein bL32 family.

This Ruegeria pomeroyi (strain ATCC 700808 / DSM 15171 / DSS-3) (Silicibacter pomeroyi) protein is Large ribosomal subunit protein bL32.